A 259-amino-acid chain; its full sequence is Tryptophan synthase alpha chain (259 aa).

Residues Glu-42 and Asp-53 each act as proton acceptor in the active site.

This sequence belongs to the TrpA family. As to quaternary structure, tetramer of two alpha and two beta chains.

It catalyses the reaction (1S,2R)-1-C-(indol-3-yl)glycerol 3-phosphate + L-serine = D-glyceraldehyde 3-phosphate + L-tryptophan + H2O. The protein operates within amino-acid biosynthesis; L-tryptophan biosynthesis; L-tryptophan from chorismate: step 5/5. In terms of biological role, the alpha subunit is responsible for the aldol cleavage of indoleglycerol phosphate to indole and glyceraldehyde 3-phosphate. This Erythrobacter litoralis (strain HTCC2594) protein is Tryptophan synthase alpha chain.